Here is a 517-residue protein sequence, read N- to C-terminus: 2,3-bisphosphoglycerate-independent phosphoglycerate mutase 1 (517 aa).

Mn(2+) contacts are provided by aspartate 17 and serine 67. Serine 67 serves as the catalytic Phosphoserine intermediate. Residues histidine 128, 158–159 (RD), arginine 190, arginine 196, 267–270 (RPDR), and lysine 340 contribute to the substrate site. Residues aspartate 407, histidine 411, aspartate 448, histidine 449, and histidine 467 each coordinate Mn(2+).

It belongs to the BPG-independent phosphoglycerate mutase family. Mn(2+) serves as cofactor.

It catalyses the reaction (2R)-2-phosphoglycerate = (2R)-3-phosphoglycerate. It participates in carbohydrate degradation; glycolysis; pyruvate from D-glyceraldehyde 3-phosphate: step 3/5. Catalyzes the interconversion of 2-phosphoglycerate and 3-phosphoglycerate. This chain is 2,3-bisphosphoglycerate-independent phosphoglycerate mutase 1, found in Methanosarcina barkeri (strain Fusaro / DSM 804).